The primary structure comprises 29 residues: Cyclotide vibi-A (29 aa).

The cyclopeptide (Gly-Asn) cross-link spans 1–29; it reads GLPVCGETCFGGTCNTPGCSCSYPICTRN. Disulfide bonds link cysteine 5–cysteine 19, cysteine 9–cysteine 21, and cysteine 14–cysteine 26.

In terms of processing, this is a cyclic peptide.

Its function is as follows. Probably participates in a plant defense mechanism. In Viola biflora (Yellow wood violet), this protein is Cyclotide vibi-A.